The chain runs to 229 residues: MPKHCFLGLLIMLLTTATETQPAHVSLKPQKVQFQSRNFHNILHWQPGNSLTSNGSVYFVQYKTYGQGQWKDKNDCWGTTALFCDLTKETLDPYEPYYGRVMMAWAGSYSEWTRTPRFTPWWETKLDPPVVTITRVNASLRVRLRPPELPHRNQTGKNTSMENYYNLVYRVSIINNSLEKEQKAYEGTQRAVEIQGLTPHCSYCVVAEMYQPMFDRRSPRSKERCVQIP.

The first 19 residues, M1–E19, serve as a signal peptide directing secretion. Fibronectin type-III domains are found at residues K28–D127 and P128–P229. An N-linked (GlcNAc...) asparagine glycan is attached at N54. 2 disulfide bridges follow: C76–C84 and C204–C225.

It belongs to the type II cytokine receptor family.

The protein resides in the secreted. In terms of biological role, receptor for IL22. Binds to IL22, prevents interaction with the functional IL-22R complex and blocks the activity of IL22 (in vitro). May play an important role as an IL22 antagonist in the regulation of inflammatory responses. This Rattus norvegicus (Rat) protein is Interleukin-22 receptor subunit alpha-2 (Il22ra2).